The primary structure comprises 386 residues: 3-ketoacyl-CoA thiolase (386 aa).

Cysteine 91 serves as the catalytic Acyl-thioester intermediate. Catalysis depends on proton acceptor residues histidine 342 and cysteine 372.

It belongs to the thiolase-like superfamily. Thiolase family. In terms of assembly, heterotetramer of two alpha chains (FadB) and two beta chains (FadA).

Its subcellular location is the cytoplasm. The catalysed reaction is an acyl-CoA + acetyl-CoA = a 3-oxoacyl-CoA + CoA. The protein operates within lipid metabolism; fatty acid beta-oxidation. Functionally, catalyzes the final step of fatty acid oxidation in which acetyl-CoA is released and the CoA ester of a fatty acid two carbons shorter is formed. The sequence is that of 3-ketoacyl-CoA thiolase from Colwellia psychrerythraea (strain 34H / ATCC BAA-681) (Vibrio psychroerythus).